Here is a 141-residue protein sequence, read N- to C-terminus: Mitochondrial import inner membrane translocase subunit tim16 (141 aa).

The interval Glu-59–Lys-117 is J-like. The disordered stretch occupies residues Lys-119–Arg-141.

Belongs to the TIM16/PAM16 family. In terms of assembly, heterodimer with tim14/pam18. Component of the PAM complex, at least composed of hsp70-5/ssc1, grpe/mge1, tim44, un-4/pam16, pam17 and tim14/pam18.

It localises to the mitochondrion inner membrane. In terms of biological role, essential component of the PAM complex, a complex required for the translocation of transit peptide-containing proteins from the inner membrane into the mitochondrial matrix in an ATP-dependent manner. In the complex, it is required to regulate activity of mtHSP70 (hsp70-5) via its interaction with tim14/pam18. May act by positioning tim14/pam18 in juxtaposition to mtHSP70 at the translocon to maximize ATPase stimulation. The sequence is that of Mitochondrial import inner membrane translocase subunit tim16 (un-4) from Neurospora crassa (strain ATCC 24698 / 74-OR23-1A / CBS 708.71 / DSM 1257 / FGSC 987).